Reading from the N-terminus, the 344-residue chain is Laforin, isoform 9 (344 aa).

Disordered regions lie at residues Met1–Gly44, Gly58–His134, Pro158–Ser188, and Ser320–Thr344. Residues Ala77–Cys88 show a composition bias toward low complexity. Gly residues predominate over residues Arg101 to Pro131. Residues Arg179–Ser188 are compositionally biased toward basic residues.

As to quaternary structure, interacts with isoform 1 and isoform 2.

The protein localises to the nucleus. This Homo sapiens (Human) protein is Laforin, isoform 9.